We begin with the raw amino-acid sequence, 728 residues long: Catalase-peroxidase (728 aa).

Residues 1–19 (MSTEAKCPVTGGATRSSSA) form the signal peptide. The segment at 1–20 (MSTEAKCPVTGGATRSSSAG) is disordered. The segment at residues 96-219 (WHAAGTYRIG…LAAVQMGLIY (124 aa)) is a cross-link (tryptophyl-tyrosyl-methioninium (Trp-Tyr) (with M-245)). His97 serves as the catalytic Proton acceptor. Residues 219–245 (YVNPEGPNGKPDPVAAARDIRETFARM) constitute a cross-link (tryptophyl-tyrosyl-methioninium (Tyr-Met) (with W-96)). His260 is a heme b binding site.

It belongs to the peroxidase family. Peroxidase/catalase subfamily. Homodimer or homotetramer. It depends on heme b as a cofactor. In terms of processing, formation of the three residue Trp-Tyr-Met cross-link is important for the catalase, but not the peroxidase activity of the enzyme.

It carries out the reaction H2O2 + AH2 = A + 2 H2O. It catalyses the reaction 2 H2O2 = O2 + 2 H2O. In terms of biological role, bifunctional enzyme with both catalase and broad-spectrum peroxidase activity. In Acidiphilium cryptum (strain JF-5), this protein is Catalase-peroxidase.